A 261-amino-acid chain; its full sequence is MTTRLLQGKKGLITGIANNMSISWAIAQLAKKHGAELWFTYQSEALEKRVKPLAEEIGCNFISELDVTDQKSISNLFNDIKEKWNSFDFLLHGMAFANKNELKGRYVDTSLENFYNSLHISCYSLLELSRSAETLMHDGGSILTLTYYGAEKVIPNYNIMGVAKAALEASVKYLANDMGENNIRVNAISAGPIKTLASSAISDFSTMLKFHASTAPLKRNITQEDVGGAAVYLFSELSKGVTGEIHYVDCGYNIIGSSKLL.

Residues glycine 15, serine 21–isoleucine 22, glutamine 42, aspartate 66–valine 67, and methionine 94 each bind NAD(+). Alanine 97 is a substrate binding site. Catalysis depends on proton acceptor residues tyrosine 147 and tyrosine 157. NAD(+) contacts are provided by residues lysine 164 and isoleucine 193–alanine 197.

Belongs to the short-chain dehydrogenases/reductases (SDR) family. FabI subfamily. In terms of assembly, homotetramer.

The catalysed reaction is a 2,3-saturated acyl-[ACP] + NAD(+) = a (2E)-enoyl-[ACP] + NADH + H(+). It participates in lipid metabolism; fatty acid biosynthesis. Catalyzes the reduction of a carbon-carbon double bond in an enoyl moiety that is covalently linked to an acyl carrier protein (ACP). Involved in the elongation cycle of fatty acid which are used in the lipid metabolism. In Rickettsia typhi (strain ATCC VR-144 / Wilmington), this protein is Enoyl-[acyl-carrier-protein] reductase [NADH] FabI (fabI).